Reading from the N-terminus, the 99-residue chain is NADH-ubiquinone oxidoreductase chain 4L (99 aa).

The next 3 helical transmembrane spans lie at 1–21 (MTIY…FFTQ), 25–45 (ILSL…SVAV), and 56–76 (VMIL…SLLV).

It belongs to the complex I subunit 4L family.

It localises to the mitochondrion membrane. The catalysed reaction is a ubiquinone + NADH + 5 H(+)(in) = a ubiquinol + NAD(+) + 4 H(+)(out). In terms of biological role, core subunit of the mitochondrial membrane respiratory chain NADH dehydrogenase (Complex I) that is believed to belong to the minimal assembly required for catalysis. Complex I functions in the transfer of electrons from NADH to the respiratory chain. The immediate electron acceptor for the enzyme is believed to be ubiquinone. The protein is NADH-ubiquinone oxidoreductase chain 4L (ND4L) of Albinaria caerulea (Land snail).